We begin with the raw amino-acid sequence, 572 residues long: Urease subunit alpha (572 aa).

The region spanning 134–572 is the Urease domain; the sequence is GGIDSHIHFI…LPMTQRYFLF (439 aa). Ni(2+) is bound by residues His139, His141, and Lys222. Lys222 carries the post-translational modification N6-carboxylysine. Residue His224 coordinates substrate. Residues His251 and His277 each contribute to the Ni(2+) site. The Proton donor role is filled by His325. Residue Asp365 participates in Ni(2+) binding.

The protein belongs to the metallo-dependent hydrolases superfamily. Urease alpha subunit family. As to quaternary structure, heterotrimer of UreA (gamma), UreB (beta) and UreC (alpha) subunits. Three heterotrimers associate to form the active enzyme. Ni cation serves as cofactor. In terms of processing, carboxylation allows a single lysine to coordinate two nickel ions.

The protein resides in the cytoplasm. The catalysed reaction is urea + 2 H2O + H(+) = hydrogencarbonate + 2 NH4(+). It functions in the pathway nitrogen metabolism; urea degradation; CO(2) and NH(3) from urea (urease route): step 1/1. The polypeptide is Urease subunit alpha (Polaromonas sp. (strain JS666 / ATCC BAA-500)).